A 345-amino-acid polypeptide reads, in one-letter code: Protein RecA (345 aa).

Position 81 to 88 (81 to 88 (GPESSGKT)) interacts with ATP.

Belongs to the RecA family.

It localises to the cytoplasm. Its function is as follows. Can catalyze the hydrolysis of ATP in the presence of single-stranded DNA, the ATP-dependent uptake of single-stranded DNA by duplex DNA, and the ATP-dependent hybridization of homologous single-stranded DNAs. It interacts with LexA causing its activation and leading to its autocatalytic cleavage. This is Protein RecA from Mycoplasma mycoides.